Consider the following 1259-residue polypeptide: Cingulin (1259 aa).

Residues 9 to 324 form a head region; it reads MADQPIPVGQ…EKFPSLQAQP (316 aa). A ZIM motif is present at residues 41-55; it reads QDSYGVAVRVQGIDG. Basic and acidic residues predominate over residues 69-79; it reads SSYDYDRHYSE. 5 disordered regions span residues 69–151, 169–232, 317–338, 941–969, and 1192–1259; these read SSYD…IDTK, VRGR…RQSL, FPSL…KKEL, KSRR…NSSR, and REME…TSSC. Residues 80 to 100 are compositionally biased toward polar residues; the sequence is RSSTLDTAYSQSSRESAWSRG. Residues 117 to 127 show a composition bias toward low complexity; the sequence is SATSQQSTSAS. The span at 128–145 shows a compositional bias: polar residues; it reads NKTNKNGLSTSSFSNQSS. Positions 179–204 are enriched in basic and acidic residues; sequence ALKDERKRSQSLDGRKNYQDTADSRE. The span at 220 to 229 shows a compositional bias: polar residues; sequence VSSANRSFAR. Positions 325–1218 form a coiled coil; it reads GEDTRSLGSQ…KTMEKESKRK (894 aa). Positions 326–338 are enriched in basic and acidic residues; the sequence is EDTRSLGSQKKEL. Residues 1220 to 1259 form a tail region; it reads IRPAHNDDDDLSSDGEYGGSYDPSSITSLLTESNLQTSSC. Residues 1241–1259 show a composition bias toward polar residues; sequence DPSSITSLLTESNLQTSSC.

This sequence belongs to the cingulin family. In terms of assembly, parallel homodimer. Interacts with TJP1/ZO1 and TJP2/ZO2.

The protein localises to the cell junction. It is found in the tight junction. Probably plays a role in the formation and regulation of the tight junction (TJ) paracellular permeability barrier, possibly by linking ZO proteins to the actomyosin cytoskeleton. This Xenopus tropicalis (Western clawed frog) protein is Cingulin.